The sequence spans 167 residues: Small ribosomal subunit protein uS5 (167 aa).

Residues 12–75 (LNEKLIAVNR…EKARRNIRDV (64 aa)) enclose the S5 DRBM domain.

This sequence belongs to the universal ribosomal protein uS5 family. As to quaternary structure, part of the 30S ribosomal subunit. Contacts proteins S4 and S8.

In terms of biological role, with S4 and S12 plays an important role in translational accuracy. Functionally, located at the back of the 30S subunit body where it stabilizes the conformation of the head with respect to the body. The sequence is that of Small ribosomal subunit protein uS5 from Psychromonas ingrahamii (strain DSM 17664 / CCUG 51855 / 37).